The primary structure comprises 84 residues: Toxin NvePTx1 (84 aa).

A signal peptide spans 1 to 21 (MFSARLVLVFAVVLCIQLCNA). The propeptide occupies 22 to 34 (SWLDERAMTQEKR).

This sequence belongs to the sea anemone type 5 potassium channel toxin family. In terms of processing, contains 4 disulfide bonds. In unfertilized eggs and early post-fertilization stages, is expressed uniformly. In gastrulae, the expression becomes spatially-localized and seems to be absent from the oral and aboral poles. In planulae, the expression is clearly observed in the ectoderm in packed gland cells absent from the two body poles, and upon metamorphosis, the expression diminishes. There is two types of gland cells, one large and elongated and another small and round. This toxin is maternally deposited at both protein and RNA levels.

Its subcellular location is the secreted. It is found in the nematocyst. Its function is as follows. Neurotoxin that is probably only defensive. Acts as a voltage-gated potassium channel (Kv) inhibitor. In vivo, induces a rapid increase in swimming speed on zebrafish larvae, as well as death which occurs between 2 and 18 hours later. The chain is Toxin NvePTx1 from Nematostella vectensis (Starlet sea anemone).